We begin with the raw amino-acid sequence, 107 residues long: Dispanin subfamily A member 2b (107 aa).

Residues 1 to 31 (MEYRTDQVPMSPRSVQGAPGTLPIRDHLPWS) lie on the Extracellular side of the membrane. Residues 32 to 52 (IFNLFYMNVCCLGLTAMIFSV) traverse the membrane as a helical segment. S-palmitoyl cysteine attachment occurs at residues Cys41 and Cys42. Topologically, residues 53–77 (KSRDRKVVGDVEGARHYGSTARSLN) are cytoplasmic. A helical transmembrane segment spans residues 78–98 (IAATVLGILLIIILIGLAATG). Residues 99-107 (TIQALKYKG) are Extracellular-facing.

Belongs to the CD225/Dispanin family. As to expression, expressed various cell types in torpedo electric organ and muscle, especially fibroblasts, capillary endothelial cells, and axonal cuff cells.

Its subcellular location is the cell membrane. The chain is Dispanin subfamily A member 2b from Torpedo marmorata (Marbled electric ray).